The primary structure comprises 47 residues: Short transmembrane mitochondrial protein 1 (47 aa).

The chain crosses the membrane as a helical span at residues 7 to 23; that stretch reads GFTLGNVVGMYLAQNYD.

This sequence belongs to the STMP1 family. In terms of assembly, interacts with components of the ubiquinol-cytochrome c oxidoreductase (cytochrome b-c1 complex, complex III, CIII), such as UQCRC1/QCR1, UQCRC2/QCR2 and UQCR10/QCR9. Interacts with components of the cytochrome c oxidase (mitochondrial respiratory chain complex IV) complex, such as MT-CO2. In terms of tissue distribution, expressed in monocytes and dendritic cells.

It localises to the mitochondrion inner membrane. Its subcellular location is the mitochondrion outer membrane. The protein resides in the mitochondrion intermembrane space. Functionally, microprotein involved in mitochondrial respiratory chain complex III (ubiquinol-cytochrome c oxidoreductase) and complex IV (mitochondrial cytochrome c oxidase complex) assembly. Required for the formation of mitochondrial supercomplexes (SCs). Also required for the activation of the NLRP3 inflammasome. This chain is Short transmembrane mitochondrial protein 1, found in Homo sapiens (Human).